The sequence spans 240 residues: Insulin-like growth factor-binding protein 3 receptor (240 aa).

The first 38 residues, Met1–Gly38, serve as a signal peptide directing secretion. At Gly39–Arg204 the chain is on the extracellular side. An N-linked (GlcNAc...) asparagine glycan is attached at Asn167. Residues Val205–Val225 traverse the membrane as a helical segment. Residues Cys226–Leu240 are Cytoplasmic-facing.

Interacts with IGFBP3. Interacts with CASP8.

The protein resides in the cell membrane. In terms of biological role, cell death receptor specific for IGFBP3, may mediate caspase-8-dependent apoptosis upon ligand binding. The polypeptide is Insulin-like growth factor-binding protein 3 receptor (Tmem219) (Mus musculus (Mouse)).